We begin with the raw amino-acid sequence, 288 residues long: Lipoyl synthase (288 aa).

Residues Cys39, Cys44, Cys50, Cys65, Cys69, Cys72, and Ser276 each contribute to the [4Fe-4S] cluster site. Residues 51–265 (WGKGTATFMI…KETGLKKGFE (215 aa)) enclose the Radical SAM core domain.

The protein belongs to the radical SAM superfamily. Lipoyl synthase family. [4Fe-4S] cluster is required as a cofactor.

The protein resides in the cytoplasm. It carries out the reaction [[Fe-S] cluster scaffold protein carrying a second [4Fe-4S](2+) cluster] + N(6)-octanoyl-L-lysyl-[protein] + 2 oxidized [2Fe-2S]-[ferredoxin] + 2 S-adenosyl-L-methionine + 4 H(+) = [[Fe-S] cluster scaffold protein] + N(6)-[(R)-dihydrolipoyl]-L-lysyl-[protein] + 4 Fe(3+) + 2 hydrogen sulfide + 2 5'-deoxyadenosine + 2 L-methionine + 2 reduced [2Fe-2S]-[ferredoxin]. It participates in protein modification; protein lipoylation via endogenous pathway; protein N(6)-(lipoyl)lysine from octanoyl-[acyl-carrier-protein]: step 2/2. Catalyzes the radical-mediated insertion of two sulfur atoms into the C-6 and C-8 positions of the octanoyl moiety bound to the lipoyl domains of lipoate-dependent enzymes, thereby converting the octanoylated domains into lipoylated derivatives. In Bacteroides fragilis (strain ATCC 25285 / DSM 2151 / CCUG 4856 / JCM 11019 / LMG 10263 / NCTC 9343 / Onslow / VPI 2553 / EN-2), this protein is Lipoyl synthase.